A 507-amino-acid chain; its full sequence is ATP synthase subunit alpha, chloroplastic (507 aa).

Residue 170–177 (GDRQTGKT) participates in ATP binding.

This sequence belongs to the ATPase alpha/beta chains family. As to quaternary structure, F-type ATPases have 2 components, CF(1) - the catalytic core - and CF(0) - the membrane proton channel. CF(1) has five subunits: alpha(3), beta(3), gamma(1), delta(1), epsilon(1). CF(0) has four main subunits: a, b, b' and c.

It is found in the plastid. It localises to the chloroplast thylakoid membrane. It carries out the reaction ATP + H2O + 4 H(+)(in) = ADP + phosphate + 5 H(+)(out). In terms of biological role, produces ATP from ADP in the presence of a proton gradient across the membrane. The alpha chain is a regulatory subunit. In Huperzia lucidula (Shining clubmoss), this protein is ATP synthase subunit alpha, chloroplastic.